The primary structure comprises 305 residues: MPDVGIIYNDSKPRACTIAEELQQQLQDRGWGVRLATSQSGLLGYSNPDTVICHTPVESLVPRGFDASLRWAIVLGGDGTVLAAARQLAPIGVPMLTVNTGHLGFLAEAYLDSLPAAIEQLCKGEYSIEERTMMEVKVLRRELIRWEALSLNEMALHREPLTSMCHFEVAIGKHVPVDIAADGVIVSTPTGSTAYSLSSGGPVVTPDVPVFQLVPICPHSLASRALVFANREPMTIFPATPERLMMVVDGNAGCYVWPEDRVLIQRSRYPAQFIRLQPNEFFRVLREKLGWGLPHVAKPSAPDQS.

Asp78 functions as the Proton acceptor in the catalytic mechanism. NAD(+)-binding positions include 78 to 79 (DG), 152 to 153 (NE), Asp182, 193 to 198 (TAYSLS), and Asn251.

Belongs to the NAD kinase family. It depends on a divalent metal cation as a cofactor.

It is found in the cytoplasm. The enzyme catalyses NAD(+) + ATP = ADP + NADP(+) + H(+). Functionally, involved in the regulation of the intracellular balance of NAD and NADP, and is a key enzyme in the biosynthesis of NADP. Catalyzes specifically the phosphorylation on 2'-hydroxyl of the adenosine moiety of NAD to yield NADP. In Synechococcus sp. (strain ATCC 27144 / PCC 6301 / SAUG 1402/1) (Anacystis nidulans), this protein is NAD kinase 2.